The following is a 201-amino-acid chain: Large ribosomal subunit protein uL4 (201 aa).

Positions 42–67 (GNSAQKTRSEVSGGGKKPWNQKGTGR) are disordered.

It belongs to the universal ribosomal protein uL4 family. In terms of assembly, part of the 50S ribosomal subunit.

Its function is as follows. One of the primary rRNA binding proteins, this protein initially binds near the 5'-end of the 23S rRNA. It is important during the early stages of 50S assembly. It makes multiple contacts with different domains of the 23S rRNA in the assembled 50S subunit and ribosome. Forms part of the polypeptide exit tunnel. This Legionella pneumophila (strain Lens) protein is Large ribosomal subunit protein uL4.